The following is a 375-amino-acid chain: Putative F-box/kelch-repeat protein At3g24610 (375 aa).

The segment at 1 to 27 (MSNEAPEVEPHSKRRKKEASPSSSSGF) is disordered. The F-box domain maps to 25–71 (SGFLQSLPEAVAMICLARVSRLDHAALSLVSKSCRSMVLSPELYQTR). The stretch at 138–183 (KINVWGGCKYKHYYDWGEVFDPKTQTWADMSIPKPVREEKIYVVDS) is one Kelch repeat.

This chain is Putative F-box/kelch-repeat protein At3g24610, found in Arabidopsis thaliana (Mouse-ear cress).